An 87-amino-acid polypeptide reads, in one-letter code: MQLLRCFSIFSVIASVLAQELTTICEQIPSPTLESTPYSLSTTTILANGKAMQGVFEYYKSVTFVSNCGSHPSTTSKGSPINTQYVF.

Residues Met-1–Ala-18 form the signal peptide. Residue Thr-22 is glycosylated (O-linked (Man...) threonine). Residue Ser-30 is glycosylated (O-linked (Man...) serine). An O-linked (Man...) threonine glycan is attached at Thr-32. Ser-39 carries O-linked (Man...) serine glycosylation. Thr-63 carries an O-linked (Man...) threonine glycan. A glycan (O-linked (Man...) serine) is linked at Ser-66. Thr-75 is a glycosylation site (O-linked (Man...) threonine).

As to quaternary structure, heterodimer; disulfide-linked. Interacts with SAG1.

In terms of biological role, receptor binding subunit of the a-agglutinin heterodimer. S.cerevisiae a and alpha cells express the complementary cell surface glycoproteins a-agglutinin and alpha-agglutinin, respectively, which interact with one another to promote cellular aggregation during mating. The polypeptide is A-agglutinin-binding subunit (AGA2) (Saccharomyces cerevisiae (strain ATCC 204508 / S288c) (Baker's yeast)).